The sequence spans 455 residues: Bifunctional protein GlmU (455 aa).

Residues 1-226 (MGLSVVILAA…EFEILGVNDR (226 aa)) form a pyrophosphorylase region. Residues 8–11 (LAAG), K22, Q73, 78–79 (GT), 99–101 (YGD), G136, E151, N166, and N224 each bind UDP-N-acetyl-alpha-D-glucosamine. D101 lines the Mg(2+) pocket. Mg(2+) is bound at residue N224. The tract at residues 227–247 (TQLASLERVWQRNVAEKIMAK) is linker. Positions 248-455 (GVSIADPNRF…WQRSVKKTDK (208 aa)) are N-acetyltransferase. The UDP-N-acetyl-alpha-D-glucosamine site is built by R330 and K348. The active-site Proton acceptor is H360. Y363 and N374 together coordinate UDP-N-acetyl-alpha-D-glucosamine. Residues A377, 383-384 (NY), S402, A420, and R437 contribute to the acetyl-CoA site.

The protein in the N-terminal section; belongs to the N-acetylglucosamine-1-phosphate uridyltransferase family. In the C-terminal section; belongs to the transferase hexapeptide repeat family. Homotrimer. Requires Mg(2+) as cofactor.

It localises to the cytoplasm. The catalysed reaction is alpha-D-glucosamine 1-phosphate + acetyl-CoA = N-acetyl-alpha-D-glucosamine 1-phosphate + CoA + H(+). It catalyses the reaction N-acetyl-alpha-D-glucosamine 1-phosphate + UTP + H(+) = UDP-N-acetyl-alpha-D-glucosamine + diphosphate. It functions in the pathway nucleotide-sugar biosynthesis; UDP-N-acetyl-alpha-D-glucosamine biosynthesis; N-acetyl-alpha-D-glucosamine 1-phosphate from alpha-D-glucosamine 6-phosphate (route II): step 2/2. Its pathway is nucleotide-sugar biosynthesis; UDP-N-acetyl-alpha-D-glucosamine biosynthesis; UDP-N-acetyl-alpha-D-glucosamine from N-acetyl-alpha-D-glucosamine 1-phosphate: step 1/1. It participates in bacterial outer membrane biogenesis; LPS lipid A biosynthesis. In terms of biological role, catalyzes the last two sequential reactions in the de novo biosynthetic pathway for UDP-N-acetylglucosamine (UDP-GlcNAc). The C-terminal domain catalyzes the transfer of acetyl group from acetyl coenzyme A to glucosamine-1-phosphate (GlcN-1-P) to produce N-acetylglucosamine-1-phosphate (GlcNAc-1-P), which is converted into UDP-GlcNAc by the transfer of uridine 5-monophosphate (from uridine 5-triphosphate), a reaction catalyzed by the N-terminal domain. In Francisella tularensis subsp. holarctica (strain OSU18), this protein is Bifunctional protein GlmU.